Here is a 51-residue protein sequence, read N- to C-terminus: Protein I177L (51 aa).

The N-linked (GlcNAc...) asparagine; by host glycan is linked to Asn-11.

The protein belongs to the asfivirus I177L family.

It is found in the virion. This is Protein I177L from Ornithodoros (relapsing fever ticks).